The following is a 714-amino-acid chain: Lipase maturation factor 2 (714 aa).

9 consecutive transmembrane segments (helical) span residues 11–31 (LFLA…YLQI), 79–99 (MELL…CAPL), 103–125 (LLFA…FLYF), 159–179 (SVTF…SGVV), 221–241 (FSVV…FMPI), 257–277 (ILII…VLAF), 304–324 (TLLS…LLYW), 358–378 (VTLP…LSAL), and 398–418 (AVFA…FTYI). N-linked (GlcNAc...) asparagine glycosylation is present at N483. A helical membrane pass occupies residues 629 to 649 (PFSPHVVLWSLYVVAATTCLL). Residues 654 to 669 (RRPRGGAPPTRHKAPK) are compositionally biased toward basic residues. The disordered stretch occupies residues 654-714 (RRPRGGAPPT…EGPRGTKRRK (61 aa)). Residues 683-708 (RRKEGREAEERGEGRSRGAADGEGPR) show a composition bias toward basic and acidic residues.

The protein belongs to the lipase maturation factor family.

The protein resides in the endoplasmic reticulum membrane. Its function is as follows. Involved in the maturation of specific proteins in the endoplasmic reticulum. May be required for maturation and transport of active lipoprotein lipase (LPL) through the secretory pathway. This is Lipase maturation factor 2 (LMF2) from Gallus gallus (Chicken).